Consider the following 35-residue polypeptide: Bacteriocin lactococcin-G subunit beta (35 aa).

As to quaternary structure, bacteriocin activity requires interaction of alpha and beta peptides in a molar ratio of 7:1 or 8:1 respectively.

In terms of biological role, kills Lactococci. The protein is Bacteriocin lactococcin-G subunit beta of Lactococcus lactis subsp. lactis (Streptococcus lactis).